Reading from the N-terminus, the 310-residue chain is Protein-L-isoaspartate O-methyltransferase (310 aa).

Disordered stretches follow at residues 1 to 46 (MSGE…DKPA) and 60 to 79 (ALPG…TVLK). A compositionally biased stretch (basic and acidic residues) spans 14–34 (EDLKRAPRKSEVRSGSGERHA). Positions 35–46 (ASAVPKAADKPA) are enriched in low complexity. Residue serine 157 is part of the active site.

This sequence belongs to the methyltransferase superfamily. L-isoaspartyl/D-aspartyl protein methyltransferase family.

Its subcellular location is the cytoplasm. The enzyme catalyses [protein]-L-isoaspartate + S-adenosyl-L-methionine = [protein]-L-isoaspartate alpha-methyl ester + S-adenosyl-L-homocysteine. In terms of biological role, catalyzes the methyl esterification of L-isoaspartyl residues in peptides and proteins that result from spontaneous decomposition of normal L-aspartyl and L-asparaginyl residues. It plays a role in the repair and/or degradation of damaged proteins. This Burkholderia ambifaria (strain ATCC BAA-244 / DSM 16087 / CCUG 44356 / LMG 19182 / AMMD) (Burkholderia cepacia (strain AMMD)) protein is Protein-L-isoaspartate O-methyltransferase.